Consider the following 450-residue polypeptide: Phosphoglucosamine mutase (450 aa).

S102 functions as the Phosphoserine intermediate in the catalytic mechanism. Mg(2+) is bound by residues S102, D243, D245, and D247. Residue S102 is modified to Phosphoserine.

It belongs to the phosphohexose mutase family. It depends on Mg(2+) as a cofactor. Post-translationally, activated by phosphorylation.

The catalysed reaction is alpha-D-glucosamine 1-phosphate = D-glucosamine 6-phosphate. Functionally, catalyzes the conversion of glucosamine-6-phosphate to glucosamine-1-phosphate. This Rhizobium rhizogenes (strain K84 / ATCC BAA-868) (Agrobacterium radiobacter) protein is Phosphoglucosamine mutase.